A 417-amino-acid polypeptide reads, in one-letter code: Serine--tRNA ligase (417 aa).

226-228 lines the L-serine pocket; sequence TSE. Residues 257–259 and Val-273 each bind ATP; that span reads RRE. An L-serine-binding site is contributed by Glu-280. Residue 344–347 coordinates ATP; the sequence is ELTS. Position 379 (Thr-379) interacts with L-serine.

The protein belongs to the class-II aminoacyl-tRNA synthetase family. Type-1 seryl-tRNA synthetase subfamily. Homodimer. The tRNA molecule binds across the dimer.

The protein resides in the cytoplasm. The enzyme catalyses tRNA(Ser) + L-serine + ATP = L-seryl-tRNA(Ser) + AMP + diphosphate + H(+). It carries out the reaction tRNA(Sec) + L-serine + ATP = L-seryl-tRNA(Sec) + AMP + diphosphate + H(+). It functions in the pathway aminoacyl-tRNA biosynthesis; selenocysteinyl-tRNA(Sec) biosynthesis; L-seryl-tRNA(Sec) from L-serine and tRNA(Sec): step 1/1. Its function is as follows. Catalyzes the attachment of serine to tRNA(Ser). Is also able to aminoacylate tRNA(Sec) with serine, to form the misacylated tRNA L-seryl-tRNA(Sec), which will be further converted into selenocysteinyl-tRNA(Sec). This Mycobacterium sp. (strain JLS) protein is Serine--tRNA ligase.